The chain runs to 404 residues: Glutamyl-tRNA reductase (404 aa).

Substrate contacts are provided by residues 47-50 (TCNR), serine 94, 99-101 (EQE), and glutamine 105. Cysteine 48 (nucleophile) is an active-site residue. Residue 174–179 (GAGEMG) participates in NADP(+) binding.

Homotetramer.

It catalyses the reaction (S)-4-amino-5-oxopentanoate + tRNA(Glu) + NADP(+) = L-glutamyl-tRNA(Glu) + NADPH + H(+). The protein operates within porphyrin-containing compound metabolism; protoporphyrin-IX biosynthesis; 5-aminolevulinate from L-glutamyl-tRNA(Glu): step 1/2. Inhibited by heavy metal compounds, Zn(2+), and heme. Also competitively inhibited by glutamycin. Catalyzes the NADPH-dependent reduction of glutamyl-tRNA(Glu) to glutamate 1-semialdehyde (GSA). In the absence of NADPH, exhibits substrate esterase activity, leading to the release of glutamate from tRNA. In Methanopyrus kandleri (strain AV19 / DSM 6324 / JCM 9639 / NBRC 100938), this protein is Glutamyl-tRNA reductase (hemA).